We begin with the raw amino-acid sequence, 94 residues long: Co-chaperonin GroES (94 aa).

This sequence belongs to the GroES chaperonin family. In terms of assembly, heptamer of 7 subunits arranged in a ring. Interacts with the chaperonin GroEL.

It localises to the cytoplasm. Its function is as follows. Together with the chaperonin GroEL, plays an essential role in assisting protein folding. The GroEL-GroES system forms a nano-cage that allows encapsulation of the non-native substrate proteins and provides a physical environment optimized to promote and accelerate protein folding. GroES binds to the apical surface of the GroEL ring, thereby capping the opening of the GroEL channel. The chain is Co-chaperonin GroES from Clostridium perfringens (strain SM101 / Type A).